Consider the following 254-residue polypeptide: Alcohol dehydrogenase (254 aa).

Phenylalanine 10–leucine 33 contacts NAD(+). Residue serine 138 participates in substrate binding. The Proton acceptor role is filled by tyrosine 151.

The protein belongs to the short-chain dehydrogenases/reductases (SDR) family. As to quaternary structure, homodimer.

The catalysed reaction is a primary alcohol + NAD(+) = an aldehyde + NADH + H(+). It catalyses the reaction a secondary alcohol + NAD(+) = a ketone + NADH + H(+). The sequence is that of Alcohol dehydrogenase (Adh) from Drosophila hawaiiensis (Fruit fly).